We begin with the raw amino-acid sequence, 166 residues long: Small ribosomal subunit protein uS5 (166 aa).

Residues 11-74 (LIDKVVHISR…ESAKRTMFEV (64 aa)) enclose the S5 DRBM domain.

It belongs to the universal ribosomal protein uS5 family. Part of the 30S ribosomal subunit. Contacts proteins S4 and S8.

Its function is as follows. With S4 and S12 plays an important role in translational accuracy. Located at the back of the 30S subunit body where it stabilizes the conformation of the head with respect to the body. In Syntrophobacter fumaroxidans (strain DSM 10017 / MPOB), this protein is Small ribosomal subunit protein uS5.